Here is a 497-residue protein sequence, read N- to C-terminus: Inactive metallocarboxypeptidase ecm14 (497 aa).

The N-terminal stretch at 1 to 28 (MAYNKSLKSLVFILLASQIVFVLFLCYG) is a signal peptide. Positions 29–148 (KSSRELGVKW…TLFESIVPDT (120 aa)) are excised as a propeptide. A Peptidase M14 domain is found at 182 to 492 (SYQNLESINS…AMILYYGEFI (311 aa)). His-248 and Glu-251 together coordinate Zn(2+). Residues 248-251 (HARE) and 323-324 (DA) contribute to the substrate site. Cys-317 and Cys-337 are disulfide-bonded. Position 377 (His-377) interacts with Zn(2+). 378-379 (SY) provides a ligand contact to substrate.

Belongs to the peptidase M14 family. It depends on Zn(2+) as a cofactor.

It localises to the endoplasmic reticulum. It is found in the secreted. Inactive carboxypeptidase that may play a role in cell wall organization and biogenesis. The polypeptide is Inactive metallocarboxypeptidase ecm14 (Schizosaccharomyces pombe (strain 972 / ATCC 24843) (Fission yeast)).